A 186-amino-acid polypeptide reads, in one-letter code: Ribosome-recycling factor (186 aa).

Belongs to the RRF family.

It is found in the cytoplasm. Functionally, responsible for the release of ribosomes from messenger RNA at the termination of protein biosynthesis. May increase the efficiency of translation by recycling ribosomes from one round of translation to another. The protein is Ribosome-recycling factor of Chlorobium phaeobacteroides (strain BS1).